The chain runs to 618 residues: Glucose starvation modulator protein 1 (618 aa).

A DNA-binding region (zn(2)-C6 fungal-type) is located at residues Cys-20–Cys-48. The segment at Ala-325–Glu-352 is disordered. Positions Ala-335–Glu-352 are enriched in basic and acidic residues. A PAS domain is found at Leu-466–Gly-538.

This sequence belongs to the ERT1/acuK family.

The protein resides in the nucleus. Transcription factor which regulates nonfermentable carbon utilization. Binds specifically to 5'-CGGN(8)CGG-3' and 5'-CGGN(9)CGG-3' sequences in the promoter region. This is Glucose starvation modulator protein 1 (GSM1) from Saccharomyces cerevisiae (strain YJM789) (Baker's yeast).